Consider the following 693-residue polypeptide: Pentatricopeptide repeat-containing protein At2g19280 (693 aa).

PPR repeat units follow at residues 200 to 234 (LETV…GIFP), 235 to 269 (SRGV…GRHL), 270 to 304 (NAAV…GIRP), 305 to 339 (DIVA…GISQ), 340 to 370 (DSVS…FRLR), 372 to 406 (NIFV…GLLP), 407 to 441 (DCVC…GNPP), 442 to 476 (SLTT…GLKL), 477 to 511 (DVVT…GISP), 512 to 546 (DVAT…GFVP), 547 to 581 (STLA…RMKP), 582 to 616 (DVVT…GLKP), and 617 to 651 (DVVL…GMLP).

Belongs to the PPR family. P subfamily.

The chain is Pentatricopeptide repeat-containing protein At2g19280 from Arabidopsis thaliana (Mouse-ear cress).